A 411-amino-acid polypeptide reads, in one-letter code: Corticotropin-releasing factor receptor 2 (411 aa).

A signal peptide (not cleaved) is located at residues 1–19; sequence MDAALLHSLLEANCSLALA. Residues 1 to 108 are Extracellular-facing; the sequence is MDAALLHSLL…EPILDDKQRK (108 aa). Residues asparagine 13, asparagine 41, asparagine 74, asparagine 86, and asparagine 94 are each glycosylated (N-linked (GlcNAc...) asparagine). Cystine bridges form between cysteine 14/cysteine 50, cysteine 40/cysteine 83, tryptophan 51/arginine 77, and cysteine 64/cysteine 98. Residues 109–139 form a helical membrane-spanning segment; that stretch reads YDLHYRIALVVNYLGHCVSVAALVAAFLLFL. At 140–146 the chain is on the cytoplasmic side; that stretch reads ALRSIRC. Residues 147–171 form a helical membrane-spanning segment; that stretch reads LRNVIHWNLITTFILRNVMWFLLQL. The Extracellular segment spans residues 172–185; the sequence is VDHEVHESNEVWCR. Cysteine 184 and cysteine 254 are joined by a disulfide. A helical membrane pass occupies residues 186–214; sequence CITTIFNYFVVTNFFWMFVEGCYLHTAIV. Residues 215–221 are Cytoplasmic-facing; it reads MTYSTER. A helical transmembrane segment spans residues 222–249; that stretch reads LRKCLFLFIGWCIPFPIIVAWAIGKLYY. The Extracellular portion of the chain corresponds to 250-265; that stretch reads ENEQCWFGKEPGDLVD. Residues 266–291 form a helical membrane-spanning segment; it reads YIYQGPIILVLLINFVFLFNIVRILM. The Cytoplasmic segment spans residues 292–302; sequence TKLRASTTSET. The helical transmembrane segment at 303 to 327 threads the bilayer; sequence IQYRKAVKATLVLLPLLGITYMLFF. The Extracellular portion of the chain corresponds to 328 to 334; that stretch reads VNPGEDD. The chain crosses the membrane as a helical span at residues 335–364; the sequence is LSQIMFIYFNSFLQSFQGFFVSVFYCFFNG. At 365-411 the chain is on the cytoplasmic side; that stretch reads EVRSAVRKRWHRWQDHHSLRVPMARAMSIPTSPTRISFHSIKQTAAV.

This sequence belongs to the G-protein coupled receptor 2 family. As to quaternary structure, monomer. Interacts (via N-terminal extracellular domain) with CRF, UCN, UCN2 and UCN3. Has highest affinity for UCN, and considerably lower affinity for CRF, UNC2 and UCN3. In terms of processing, a N-glycosylation site within the signal peptide impedes its proper cleavage and function.

It is found in the cell membrane. In terms of biological role, G-protein coupled receptor for CRH (corticotropin-releasing factor), UCN (urocortin), UCN2 and UCN3. Has high affinity for UCN. Ligand binding causes a conformation change that triggers signaling via guanine nucleotide-binding proteins (G proteins) and down-stream effectors, such as adenylate cyclase. Promotes the activation of adenylate cyclase, leading to increased intracellular cAMP levels. This is Corticotropin-releasing factor receptor 2 (CRHR2) from Homo sapiens (Human).